The chain runs to 64 residues: Conotoxin VnMLCL-033 (64 aa).

The signal sequence occupies residues 1–19 (MLCLPVFIILLLLASPAAP). The propeptide occupies 20–43 (NPLQTRIQSNLIRAGPEDANIKTD). Residue Ile63 is modified to Isoleucine amide.

Belongs to the conotoxin T superfamily. As to expression, expressed by the venom duct.

The protein resides in the secreted. This is Conotoxin VnMLCL-033 from Conus ventricosus (Mediterranean cone).